The primary structure comprises 464 residues: Chromosomal replication initiator protein DnaA (464 aa).

The domain I, interacts with DnaA modulators stretch occupies residues 1–82 (MKNAAELWHN…GSRLDIQFIE (82 aa)). Residues 82–125 (EEGQAKHMLDRQNEEVEVMEVAPAKTKAQKTPKSSDELVMSELG) form a domain II region. A domain III, AAA+ region region spans residues 126–342 (QLNEKYTFDT…GALTRVIAYA (217 aa)). ATP is bound by residues Gly170, Gly172, Lys173, and Thr174. Residues 343–464 (NLVGRTIDPN…EQIKHELKHS (122 aa)) form a domain IV, binds dsDNA region.

This sequence belongs to the DnaA family. As to quaternary structure, oligomerizes as a right-handed, spiral filament on DNA at oriC.

The protein resides in the cytoplasm. Its function is as follows. Plays an essential role in the initiation and regulation of chromosomal replication. ATP-DnaA binds to the origin of replication (oriC) to initiate formation of the DNA replication initiation complex once per cell cycle. Binds the DnaA box (a 9 base pair repeat at the origin) and separates the double-stranded (ds)DNA. Forms a right-handed helical filament on oriC DNA; dsDNA binds to the exterior of the filament while single-stranded (ss)DNA is stabiized in the filament's interior. The ATP-DnaA-oriC complex binds and stabilizes one strand of the AT-rich DNA unwinding element (DUE), permitting loading of DNA polymerase. After initiation quickly degrades to an ADP-DnaA complex that is not apt for DNA replication. Binds acidic phospholipids. The polypeptide is Chromosomal replication initiator protein DnaA (Exiguobacterium sibiricum (strain DSM 17290 / CCUG 55495 / CIP 109462 / JCM 13490 / 255-15)).